The following is a 376-amino-acid chain: TelA-like protein SERP0976 (376 aa).

The protein belongs to the TelA family.

The protein is TelA-like protein SERP0976 of Staphylococcus epidermidis (strain ATCC 35984 / DSM 28319 / BCRC 17069 / CCUG 31568 / BM 3577 / RP62A).